We begin with the raw amino-acid sequence, 424 residues long: MFSPVIVSVIFTIAFCDASPARDGFGCSNSGITDKDRQAFLDFHNNARRRVAKGVEDSNSGKLNPAKNMYKLSWDCAMEQQLQDAIQSCPSAFAGIQGVAQNVMSWSSSGGFPDPSVKIEQTLSGWWSGAKKNGVGPDNKYNGGGLFAFSNMVYSETTKLGCAYKVCGTKLAVSCIYNGVGYITNQPMWETGQACKTGADCSTYKNSGCEDGLCTKGPDVPETNQQCPSNTGMTDSVRDTFLSVHNEFRSSVARGLEPDALGGNAPKAAKMLKMVYDCEVEASAIRHGNKCVYQHSHGEDRPGLGENIYKTSVLKFDKNKAAKQASQLWWNELKEFGVGPSNVLTTALWNRPGMQIGHYTQMAWDTTYKLGCAVVFCNDFTFGVCQYGPGGNYMGHVIYTMGQPCSQCSPGATCSVTEGLCSAP.

The first 18 residues, 1–18, serve as a signal peptide directing secretion; sequence MFSPVIVSVIFTIAFCDA. 2 SCP domains span residues 41 to 177 and 242 to 387; these read LDFH…SCIY and LSVH…VCQY.

It belongs to the CRISP family.

It is found in the secreted. In terms of biological role, associated with the transition to parasitism by infective hookworm larvae. The protein is Ancylostoma secreted protein (ASP) of Ancylostoma caninum (Dog hookworm).